The following is a 344-amino-acid chain: Meiotic recombination protein DMC1 homolog A (344 aa).

Position 133–140 (133–140 (GEFRSGKT)) interacts with ATP. Arg-235 contributes to the dsDNA binding site. SsDNA is bound by residues Arg-235, Phe-238, Arg-241, Arg-247, and Arg-315. 2 residues coordinate dsDNA: Arg-241 and Arg-247.

Belongs to the RecA family. DMC1 subfamily. Expressed in meiotic young panicles.

The protein resides in the nucleus. In terms of biological role, recombinase that may participate in meiotic recombination, specifically in homologous strand assimilation, which is required for the resolution of meiotic double-strand breaks. Exhibits DNA-dependent ATPase activity when bound to single-stranded DNA (ssDNA). Mediates renaturation of homologous complementary strands as well as assimilation of single strands into homologous supercoiled duplexes leading to D-loop formation. Binds circular single-stranded DNA (ssDNA) and circular double-stranded DNA (dsDNA) in vitro. Catalyzes DNA homologous renaturation and DNA strand exchange. The rates of these activities are dependent on the state of ATP hydrolysis. Forms helical filaments along ssDNA and dsDNA, and promotes strand exchange between ssDNA and dsDNA with long DNA substrates of several thousand base pairs. The presence of the replication protein A is not required for this activity. Seems to be required for homologous pairing and subsequent chromosome segregation during male meiosis. May be not directly required for homologous pairing during male meiosis. Required for synaptonemal complex assembly and crossover formation. Functions redundantly with DMC1B. The chain is Meiotic recombination protein DMC1 homolog A from Oryza sativa subsp. japonica (Rice).